A 952-amino-acid chain; its full sequence is G patch domain-containing protein 1 homolog (952 aa).

Disordered stretches follow at residues 104 to 127, 165 to 233, 320 to 345, 370 to 432, 660 to 711, and 822 to 952; these read QGIRTRDEFANEDEQKQRSDQRRR, GWKP…DDYE, DKKPKQKKQQHVQQRHVIDGFSEDNS, RSRF…KDHS, PEKV…RNKP, and VAPE…KSKH. The segment covering 107–123 has biased composition (basic and acidic residues); the sequence is RTRDEFANEDEQKQRSD. The G-patch domain occupies 153–199; sequence RDKVAVRILKSMGWKPGQGVGPRQTRKEKRQATARNSKEQYLMEHYG. The span at 214–233 shows a compositional bias: acidic residues; sequence DSNNEDEDDEDITFAPDDYE. Positions 323–333 are enriched in basic residues; the sequence is PKQKKQQHVQQ. Basic and acidic residues-rich tracts occupy residues 375 to 402, 414 to 432, and 679 to 691; these read PMDKERAQKLETASEYKRSGLGRHDLNP, QEEKTAEEQPKRNPFKDHS, and IQDKPNTKEEPSK. The span at 886–896 shows a compositional bias: low complexity; sequence ASSSNESSSSD. Basic residues-rich tracts occupy residues 906 to 934 and 941 to 952; these read KLSKPKKSHKGSSSKKSKKSKLKSKKKSK and HKAKKKKKKSKH.

This sequence belongs to the GPATCH1 family.

This Drosophila melanogaster (Fruit fly) protein is G patch domain-containing protein 1 homolog.